We begin with the raw amino-acid sequence, 229 residues long: MDKKRSSLKGSLLLLLLLVSDLLLCKSVASLPICPSGAVNCQVSLRELFDRAVILSHYIHNLSSEMFNEFDKRYAQGRGFVTKAINSCHTSSLSTPEDKEQAQQIHHEDLLNLILRVLRSWNDPLYHLVSEVRGMQEAPEAILSKAIEIEEQNRRLLEGMEKIVGQVQPRIKENEVYSVWSGLPSLQMADEDSRLFAFYNLLHCLRRDSHKIDNYLKLLKCRIVYDSNC.

The N-terminal stretch at 1–30 (MDKKRSSLKGSLLLLLLLVSDLLLCKSVAS) is a signal peptide. The cysteines at positions 34 and 41 are disulfide-linked. S56 carries the phosphoserine modification. N-linked (GlcNAc...) asparagine; partial glycosylation occurs at N61. S64 and S120 each carry phosphoserine. Intrachain disulfides connect C88-C204 and C221-C229.

Belongs to the somatotropin/prolactin family. In terms of assembly, interacts with PRLR.

The protein resides in the secreted. Prolactin acts primarily on the mammary gland by promoting lactation. This Equus caballus (Horse) protein is Prolactin (PRL).